The primary structure comprises 441 residues: 23S rRNA (uracil(1939)-C(5))-methyltransferase RlmD (441 aa).

Residues 1 to 56 (MSIDSLDMEARGVGRLLNEDGTPGKVIFVEGALPGETVSYRSFRRKPSYEQAHLVE) form the TRAM domain. Positions 69, 75, 78, and 157 each coordinate [4Fe-4S] cluster. S-adenosyl-L-methionine is bound by residues Gln-265, Phe-294, Asn-299, Glu-315, Asn-343, and Asp-364. Residue Cys-397 is the Nucleophile of the active site.

It belongs to the class I-like SAM-binding methyltransferase superfamily. RNA M5U methyltransferase family. RlmD subfamily.

It catalyses the reaction uridine(1939) in 23S rRNA + S-adenosyl-L-methionine = 5-methyluridine(1939) in 23S rRNA + S-adenosyl-L-homocysteine + H(+). Functionally, catalyzes the formation of 5-methyl-uridine at position 1939 (m5U1939) in 23S rRNA. This chain is 23S rRNA (uracil(1939)-C(5))-methyltransferase RlmD, found in Cupriavidus necator (strain ATCC 17699 / DSM 428 / KCTC 22496 / NCIMB 10442 / H16 / Stanier 337) (Ralstonia eutropha).